The sequence spans 364 residues: Probable tartrate dehydrogenase/decarboxylase TtuC (364 aa).

Positions 222, 246, and 250 each coordinate Mn(2+).

Belongs to the isocitrate and isopropylmalate dehydrogenases family. Mg(2+) serves as cofactor. It depends on Mn(2+) as a cofactor. K(+) is required as a cofactor.

It is found in the cytoplasm. The catalysed reaction is tartrate + NAD(+) = 2-hydroxy-3-oxosuccinate + NADH + H(+). The enzyme catalyses (2R,3S)-tartrate + NAD(+) = 2-hydroxy-3-oxosuccinate + NADH + H(+). It carries out the reaction (2R,3R)-tartrate + NAD(+) = 2-hydroxy-3-oxosuccinate + NADH + H(+). It catalyses the reaction (2R,3R)-tartrate + H(+) = (R)-glycerate + CO2. The catalysed reaction is (R)-malate + NAD(+) = pyruvate + CO2 + NADH. It participates in carbohydrate acid metabolism; tartrate degradation; 2-hydroxy-3-oxosuccinate from L-tartrate: step 1/1. Its pathway is carbohydrate acid metabolism; tartrate degradation; 2-hydroxy-3-oxosuccinate from meso-tartrate: step 1/1. It functions in the pathway carbohydrate acid metabolism; tartrate degradation; D-glycerate from L-tartrate: step 1/1. Functionally, has multiple catalytic activities. Apart from catalyzing the oxidation of (+)-tartrate to oxaloglycolate, also converts meso-tartrate to D-glycerate and catalyzes the oxidative decarboxylation of D-malate to pyruvate. This is Probable tartrate dehydrogenase/decarboxylase TtuC (ttuC) from Agrobacterium vitis (Rhizobium vitis).